A 252-amino-acid chain; its full sequence is Floral homeotic protein AGAMOUS (252 aa).

Positions 1–20 (MAYQSELGGDSSPLRKSGRG) are disordered. Positions 19 to 73 (RGKIEIKRIENTTNRQVTFCKRRNGLLKKAYELSVLCDAEVALIVFSSRGRLYEY) constitute an MADS-box domain. A coiled-coil region spans residues 99-166 (AEINAQYYQQ…KKNELLFSEI (68 aa)). In terms of domain architecture, K-box spans 103-193 (AQYYQQESAK…RAKIAENERN (91 aa)).

In terms of assembly, homodimer, capable of binding to CArG-box sequences. Forms a heterodimer via the K-box domain with either SEPALATTA1/AGL2, SEPALATTA2/AGL4, SEPALLATA3/AGL9 or AGL6. Heterodimerization also seen with some other Agamous-like MADS-box proteins. Interacts with AGL15 and AGL16. Component of a complex made of FLOR1, VSP1 and AGAMOUS (AG). Binds directly with FLR1. In terms of tissue distribution, detected early in the floral meristem but mostly expressed in stamen and carpel primordia.

It localises to the nucleus. Its function is as follows. Probable transcription factor involved in the control of organ identity during the early development of flowers. Is required for normal development of stamens and carpels in the wild-type flower. Plays a role in maintaining the determinacy of the floral meristem. Acts as C class cadastral protein by repressing the A class floral homeotic genes like APETALA1. Forms a heterodimer via the K-box domain with either SEPALATTA1/AGL2, SEPALATTA2/AGL4, SEPALLATA3/AGL9 or AGL6 that could be involved in genes regulation during floral meristem development. Controls AHL21/GIK, a multifunctional chromatin modifier in reproductive organ patterning and differentiation. Induces microsporogenesis through the activation of SPL/NZZ. In Arabidopsis thaliana (Mouse-ear cress), this protein is Floral homeotic protein AGAMOUS (AG).